A 282-amino-acid polypeptide reads, in one-letter code: Digeranylgeranylglyceryl phosphate synthase (282 aa).

The next 9 helical transmembrane spans lie at 15-35 (VIGAALGAIMGFLVSSQWYLE), 36-56 (LKGILLSALVVGLIAAGGYVI), 81-100 (VNKAKALSIALFIIGIALSI), 104-121 (IYALVIALVTAIGLIYYA), 131-151 (GNLLVATTTALSIFYGGLAFF), 159-179 (IIIPTLYAFFLTLIREIVKGI), 201-221 (KSWRIAKILLVLLLIISPLPF), 222-242 (FIGFNLIYLILLILVFIPFTI), and 260-280 (YLKISAISGIIAFLLGSLPFF).

It belongs to the UbiA prenyltransferase family. DGGGP synthase subfamily. Mg(2+) serves as cofactor. Ca(2+) is required as a cofactor.

It is found in the cell membrane. It carries out the reaction sn-3-O-(geranylgeranyl)glycerol 1-phosphate + (2E,6E,10E)-geranylgeranyl diphosphate = 2,3-bis-O-(geranylgeranyl)-sn-glycerol 1-phosphate + diphosphate. Its pathway is membrane lipid metabolism; glycerophospholipid metabolism. With respect to regulation, inhibited by EDTA in vitro. In terms of biological role, prenyltransferase that catalyzes the transfer of the geranylgeranyl moiety of geranylgeranyl diphosphate (GGPP) to the C2 hydroxyl of (S)-3-O-geranylgeranylglyceryl phosphate (GGGP). This reaction is the second ether-bond-formation step in the biosynthesis of archaeal membrane lipids. Cannot use other prenyl donors, i.e. farnesyl diphosphate (FPP) and phytyl diphosphate. Moreover, 4-hydroxybenzoate, 1,4-dihydroxy 2-naphthoate, homogentisate, and alpha-glycerophosphate do not function as prenyl acceptor substrates. This Saccharolobus solfataricus (strain ATCC 35092 / DSM 1617 / JCM 11322 / P2) (Sulfolobus solfataricus) protein is Digeranylgeranylglyceryl phosphate synthase (ubiA-2).